Consider the following 117-residue polypeptide: Large ribosomal subunit protein bL20 (117 aa).

It belongs to the bacterial ribosomal protein bL20 family.

In terms of biological role, binds directly to 23S ribosomal RNA and is necessary for the in vitro assembly process of the 50S ribosomal subunit. It is not involved in the protein synthesizing functions of that subunit. The sequence is that of Large ribosomal subunit protein bL20 from Roseiflexus sp. (strain RS-1).